The chain runs to 416 residues: Serine hydroxymethyltransferase (416 aa).

Residues Leu117 and 121–123 (GHL) contribute to the (6S)-5,6,7,8-tetrahydrofolate site. Lys226 is subject to N6-(pyridoxal phosphate)lysine. Residue Glu242 participates in (6S)-5,6,7,8-tetrahydrofolate binding.

It belongs to the SHMT family. In terms of assembly, homodimer. It depends on pyridoxal 5'-phosphate as a cofactor.

It localises to the cytoplasm. It carries out the reaction (6R)-5,10-methylene-5,6,7,8-tetrahydrofolate + glycine + H2O = (6S)-5,6,7,8-tetrahydrofolate + L-serine. It participates in one-carbon metabolism; tetrahydrofolate interconversion. It functions in the pathway amino-acid biosynthesis; glycine biosynthesis; glycine from L-serine: step 1/1. Functionally, catalyzes the reversible interconversion of serine and glycine with tetrahydrofolate (THF) serving as the one-carbon carrier. This reaction serves as the major source of one-carbon groups required for the biosynthesis of purines, thymidylate, methionine, and other important biomolecules. Also exhibits THF-independent aldolase activity toward beta-hydroxyamino acids, producing glycine and aldehydes, via a retro-aldol mechanism. The polypeptide is Serine hydroxymethyltransferase (Endomicrobium trichonymphae).